Here is a 152-residue protein sequence, read N- to C-terminus: MSCMGAAVNIITTDGPSGRAGFTASAVCSVTDTPPTLLVCLNRGASVWPVFNENRTLCVNTLSAGQEPLSNLFGGKTPMEHRFAAARWQTGVTGCPQLEEALVSFDCRISQVVSVGTHDILFCAIEAIHRHTTPYGLVWFDRSYHALMRPAC.

Belongs to the non-flavoprotein flavin reductase family. RutF subfamily.

The enzyme catalyses FMNH2 + NAD(+) = FMN + NADH + 2 H(+). Functionally, catalyzes the reduction of FMN to FMNH2 which is used to reduce pyrimidine by RutA via the Rut pathway. This chain is FMN reductase (NADH) RutF, found in Shigella sonnei (strain Ss046).